Here is a 507-residue protein sequence, read N- to C-terminus: TOM1-like protein 2 (507 aa).

Residues 20-152 form the VHS domain; the sequence is ATDGSLQSED…ELKRRGIEFP (133 aa). S160 is modified (phosphoserine). T164 is subject to Phosphothreonine. Positions 164–200 are disordered; it reads TPQRSVPEMDPAATIPRSQTQPRTTAGTYSSPPPASY. The region spanning 219–307 is the GAT domain; it reads EQIARLRSEL…VFLRYERFER (89 aa). Residues 329-334 carry the Clathrin-binding motif; it reads NLIDLG. The segment at 466–507 is disordered; it reads ERAKAAETVPDLPSPPTEAPAPASNTSTRKKPERSDDALFAL. Over residues 498-507 the composition is skewed to basic and acidic residues; sequence ERSDDALFAL.

The protein belongs to the TOM1 family. In terms of assembly, interacts with clathrin, SRC and TOLLIP. Interacts with MYO6. Ubiquitously expressed. Splicing pattern displays tissue specific variation.

Its function is as follows. Acts as a MYO6/Myosin VI adapter protein that targets myosin VI to endocytic structures. May also play a role in recruiting clathrin to endosomes. May regulate growth factor-induced mitogenic signaling. This is TOM1-like protein 2 (Tom1l2) from Mus musculus (Mouse).